Here is a 461-residue protein sequence, read N- to C-terminus: Siroheme synthase (461 aa).

Residues 1–204 (MDYFPIFCQL…GDTTQAQQQV (204 aa)) are precorrin-2 dehydrogenase /sirohydrochlorin ferrochelatase. NAD(+)-binding positions include 22–23 (EV) and 43–44 (GR). At Ser128 the chain carries Phosphoserine. The uroporphyrinogen-III C-methyltransferase stretch occupies residues 216-461 (GEVTLVGAGP…NWFRCEAASA (246 aa)). Pro225 lines the S-adenosyl-L-methionine pocket. Asp248 functions as the Proton acceptor in the catalytic mechanism. Lys270 functions as the Proton donor in the catalytic mechanism. Residues 301–303 (GGD), Ile306, 331–332 (TA), Met382, and Gly411 each bind S-adenosyl-L-methionine.

In the N-terminal section; belongs to the precorrin-2 dehydrogenase / sirohydrochlorin ferrochelatase family. The protein in the C-terminal section; belongs to the precorrin methyltransferase family.

It carries out the reaction uroporphyrinogen III + 2 S-adenosyl-L-methionine = precorrin-2 + 2 S-adenosyl-L-homocysteine + H(+). It catalyses the reaction precorrin-2 + NAD(+) = sirohydrochlorin + NADH + 2 H(+). The enzyme catalyses siroheme + 2 H(+) = sirohydrochlorin + Fe(2+). The protein operates within cofactor biosynthesis; adenosylcobalamin biosynthesis; precorrin-2 from uroporphyrinogen III: step 1/1. Its pathway is cofactor biosynthesis; adenosylcobalamin biosynthesis; sirohydrochlorin from precorrin-2: step 1/1. It participates in porphyrin-containing compound metabolism; siroheme biosynthesis; precorrin-2 from uroporphyrinogen III: step 1/1. It functions in the pathway porphyrin-containing compound metabolism; siroheme biosynthesis; siroheme from sirohydrochlorin: step 1/1. The protein operates within porphyrin-containing compound metabolism; siroheme biosynthesis; sirohydrochlorin from precorrin-2: step 1/1. Functionally, multifunctional enzyme that catalyzes the SAM-dependent methylations of uroporphyrinogen III at position C-2 and C-7 to form precorrin-2 via precorrin-1. Then it catalyzes the NAD-dependent ring dehydrogenation of precorrin-2 to yield sirohydrochlorin. Finally, it catalyzes the ferrochelation of sirohydrochlorin to yield siroheme. The protein is Siroheme synthase of Edwardsiella ictaluri (strain 93-146).